The chain runs to 89 residues: Small ribosomal subunit protein uS15 (89 aa).

The protein belongs to the universal ribosomal protein uS15 family. Part of the 30S ribosomal subunit. Forms a bridge to the 50S subunit in the 70S ribosome, contacting the 23S rRNA.

In terms of biological role, one of the primary rRNA binding proteins, it binds directly to 16S rRNA where it helps nucleate assembly of the platform of the 30S subunit by binding and bridging several RNA helices of the 16S rRNA. Its function is as follows. Forms an intersubunit bridge (bridge B4) with the 23S rRNA of the 50S subunit in the ribosome. The chain is Small ribosomal subunit protein uS15 from Ureaplasma parvum serovar 3 (strain ATCC 27815 / 27 / NCTC 11736).